The sequence spans 287 residues: Stomatin-like protein 3 (287 aa).

Ser3 is subject to Phosphoserine. Residues 25–45 form a helical; Signal-anchor for type III membrane protein membrane-spanning segment; that stretch reads WILFFLSFLLMLVTFPISVWM. At 46–287 the chain is on the cytoplasmic side; sequence CLKIIKEYER…GNNKKVTAKA (242 aa). Ser237 is modified (phosphoserine).

Belongs to the band 7/mec-2 family. Homodimer. Interacts with PIEZO1 and PIEZO2. As to expression, expressed by all dorsal root ganglion neurons and is selectively expressed in neuronal tissues. Detected in olfactory epithelium.

It is found in the cell membrane. Required for the function of many mechanoreceptors. Modulate mechanotransduction channels and acid-sensing ion channels (ASIC) proteins. Potentiates PIEZO1 and PIEZO2 function by increasing their sensitivity to mechanical stimulations. The polypeptide is Stomatin-like protein 3 (Stoml3) (Mus musculus (Mouse)).